The primary structure comprises 414 residues: MAGMASDGTQYDPRQFDTKMNAILGEEGEETFYTNYDEVCDSFDAMELQPDLLRGIYAYGFEKPSAIQQRGIIPFCKGLDVIQQAQSGTGKTATFCSGVLQQLDISLVQCQALVLAPTRELAQQIEKVMRALGDYLGVKAQACVGGTSVREDQRVLQSGVHVVVGTPGRVFDLLRRQSLRADAIKMFVLDEADEMLSRGFKDQIYDIFQLLPSKVQVGVFSATMPPEALEITRKFMNKPVRILVKRDELTLEGIKQFYVNVDKEEWKLETLCDLYETLAITQSVIFVNTRRKVDWLTDKMRSRDHTVSATHGDMDQNTRDIIMREFRSGSSRVLITTDLLARGIDVQQVSLVINFDLPTQPENYLHRIGRSGRFGRKGVAINFMTSEDERMMADIQRFYNVVVEELPSNVADLL.

Ala2 carries the post-translational modification N-acetylalanine. Residues 41 to 69 carry the Q motif motif; it reads DSFDAMELQPDLLRGIYAYGFEKPSAIQQ. The Helicase ATP-binding domain occupies 72–242; the sequence is IIPFCKGLDV…RKFMNKPVRI (171 aa). 85–92 is an ATP binding site; that stretch reads AQSGTGKT. Ser106 carries the phosphoserine modification. At Thr147 the chain carries Phosphothreonine. A DEAD box motif is present at residues 190 to 193; it reads DEAD. A Helicase C-terminal domain is found at 253–414; sequence GIKQFYVNVD…ELPSNVADLL (162 aa).

This sequence belongs to the DEAD box helicase family. eIF4A subfamily. EIF4F is a multi-subunit complex, the composition of which varies with external and internal environmental conditions. It is composed of at least EIF4A, EIF4E and EIF4G.

It localises to the cytoplasm. It carries out the reaction ATP + H2O = ADP + phosphate + H(+). Its function is as follows. ATP-dependent RNA helicase which is a subunit of the eIF4F complex involved in cap recognition and is required for mRNA binding to ribosome. In the current model of translation initiation, eIF4A unwinds RNA secondary structures in the 5'-UTR of mRNAs which is necessary to allow efficient binding of the small ribosomal subunit, and subsequent scanning for the initiator codon. This Arabidopsis thaliana (Mouse-ear cress) protein is Eukaryotic initiation factor 4A-3 (TIF4A-3).